Consider the following 229-residue polypeptide: Protein GrpE (229 aa).

Disordered regions lie at residues 1-49 (MTEG…SANS) and 207-229 (DSTA…EDGD). Positions 13-24 (TDKRRIDPDTGE) are enriched in basic and acidic residues.

It belongs to the GrpE family. As to quaternary structure, homodimer.

Its subcellular location is the cytoplasm. Participates actively in the response to hyperosmotic and heat shock by preventing the aggregation of stress-denatured proteins, in association with DnaK and GrpE. It is the nucleotide exchange factor for DnaK and may function as a thermosensor. Unfolded proteins bind initially to DnaJ; upon interaction with the DnaJ-bound protein, DnaK hydrolyzes its bound ATP, resulting in the formation of a stable complex. GrpE releases ADP from DnaK; ATP binding to DnaK triggers the release of the substrate protein, thus completing the reaction cycle. Several rounds of ATP-dependent interactions between DnaJ, DnaK and GrpE are required for fully efficient folding. The protein is Protein GrpE of Mycobacterium leprae (strain TN).